Reading from the N-terminus, the 335-residue chain is UPF0353 protein MAP_1207 (335 aa).

The next 2 helical transmembrane spans lie at 18–38 (WFFLFLLVVAGLAALYILMQL) and 67–87 (LPAILLVASLVLFTIAMAGPT). Residues 98–294 (VVMLVIDVSQ…QELKSVYATL (197 aa)) form the VWFA domain. The helical transmembrane segment at 309–329 (VGWVRLGALVLALAALTALLI) threads the bilayer.

This sequence belongs to the UPF0353 family.

Its subcellular location is the cell membrane. In Mycolicibacterium paratuberculosis (strain ATCC BAA-968 / K-10) (Mycobacterium paratuberculosis), this protein is UPF0353 protein MAP_1207.